The sequence spans 471 residues: 3-isopropylmalate dehydratase large subunit (471 aa).

The [4Fe-4S] cluster site is built by Cys347, Cys407, and Cys410.

Belongs to the aconitase/IPM isomerase family. LeuC type 1 subfamily. In terms of assembly, heterodimer of LeuC and LeuD. The cofactor is [4Fe-4S] cluster.

The enzyme catalyses (2R,3S)-3-isopropylmalate = (2S)-2-isopropylmalate. It participates in amino-acid biosynthesis; L-leucine biosynthesis; L-leucine from 3-methyl-2-oxobutanoate: step 2/4. In terms of biological role, catalyzes the isomerization between 2-isopropylmalate and 3-isopropylmalate, via the formation of 2-isopropylmaleate. The sequence is that of 3-isopropylmalate dehydratase large subunit from Geobacillus thermodenitrificans (strain NG80-2).